Consider the following 145-residue polypeptide: Thioredoxin C-3 (145 aa).

Heme-binding residues include C25, C28, and H29. A Thioredoxin domain is found at 29–140 (HQALLPLEPI…LQQWLDQQLQ (112 aa)). C65 and C68 are oxidised to a cystine.

Belongs to the thioredoxin family.

Its function is as follows. Participates in various redox reactions through the reversible oxidation of its active center dithiol to a disulfide and catalyzes dithiol-disulfide exchange reactions. This Corynebacterium nephridii protein is Thioredoxin C-3.